Reading from the N-terminus, the 636-residue chain is MRLVSKLLKALLVLLLAFGSVRYSCDNYTSGELQICKYTAPQHYRAIIGGRFPQVIKYSDSLVAKYETVVVPRVGSAVIHVKDTVEQKVVPSVIRTSRSSLSLVYTKVYPRVVKYAFIAESSLCRWYLQLCHQYTVYVKPVVINLYYKTMIKYPFLEHAIYSVQAQYKIMETHVFKYYNIISYNVQVWNDKYGYGRLSRNKIFIRMKSTVVEHLIIWYRYVNNRCRKMWRENLCPIINKSRERFAYHGGVRPESATTDPDDESIFYEDDDVDEYTETSTIVLTVTQTANSALDLKATPSASGLIVDECDMSMEEMLRNDFMSWKITIENKLSNTMKDFENDINEFAQEKLDHIQPTLADLLKRASNTSQTNFQIITKAIMDVNCTESVDPKTNKTIWFDQNNTQLPKYMTRELMREYFSAAHSQFDALSQEIRAHLRKLADEVNDHVEVLRQENVELFEEWADVMITEWSKNLAYVDVAVNEEKLADLEKEQRKNWKDFMKLKRQVIKTRDTLMEHPVKLDSLQSFVNTVQQSLKTLSHENGEYLYILRSKANLEFQAREALERQQREKEKAESASMKASTEFELSSSSFSSSSPSTASSCTASSTSTASLLAVEKTIALEDLQSYYQNVSSTDSL.

A signal peptide spans 1–23; the sequence is MRLVSKLLKALLVLLLAFGSVRY. Coiled coils occupy residues 433–460 and 551–584; these read RAHLRKLADEVNDHVEVLRQENVELFEE and KANLEFQAREALERQQREKEKAESASMKASTEFE. The interval 565-607 is disordered; that stretch reads QQREKEKAESASMKASTEFELSSSSFSSSSPSTASSCTASSTS. Low complexity predominate over residues 579–607; sequence ASTEFELSSSSFSSSSPSTASSCTASSTS.

The protein belongs to the SHE10 family. As to quaternary structure, component of the mitochondria-localized RNase mitochondrial RNA-processing (RNase MRP) composed of one single RNA encoded by the NME1 gene and at least 31 proteins. Absent in the nucleus-localized RNase MRP (NuMRP).

The protein localises to the mitochondrion. In terms of biological role, involved in spore wall assembly. May be a component of the mitochondrial RNase MRP (MtMRP), a ribonucleoprotein endoribonuclease involved in the cleaving RNA transcripts to generate primers for DNA replication in mitochondria. The chain is Outer spore wall assembly protein SHE10 from Kluyveromyces lactis (strain ATCC 8585 / CBS 2359 / DSM 70799 / NBRC 1267 / NRRL Y-1140 / WM37) (Yeast).